The chain runs to 504 residues: Glutamate--tRNA ligase (504 aa).

Positions 25–35 match the 'HIGH' region motif; that stretch reads PSPTGNPHVGL. Residues Cys122, Cys124, Cys149, and Asp151 each contribute to the Zn(2+) site. The 'KMSKS' region signature appears at 270 to 274; that stretch reads KLSKR. An ATP-binding site is contributed by Lys273.

Belongs to the class-I aminoacyl-tRNA synthetase family. Glutamate--tRNA ligase type 1 subfamily. In terms of assembly, monomer. Requires Zn(2+) as cofactor.

The protein localises to the cytoplasm. The catalysed reaction is tRNA(Glu) + L-glutamate + ATP = L-glutamyl-tRNA(Glu) + AMP + diphosphate. Its function is as follows. Catalyzes the attachment of glutamate to tRNA(Glu) in a two-step reaction: glutamate is first activated by ATP to form Glu-AMP and then transferred to the acceptor end of tRNA(Glu). The protein is Glutamate--tRNA ligase of Streptomyces griseus subsp. griseus (strain JCM 4626 / CBS 651.72 / NBRC 13350 / KCC S-0626 / ISP 5235).